Consider the following 648-residue polypeptide: Macrolide export ATP-binding/permease protein MacB (648 aa).

Residues 5–243 (LELKDIRRSY…AGGTEPVVNT (239 aa)) form the ABC transporter domain. 41–48 (GASGSGKS) contributes to the ATP binding site. Helical transmembrane passes span 273–293 (LLTM…VVVG), 523–543 (LFLT…VMNI), 576–596 (AVLV…LIAF), and 600–620 (LFLP…AFLC).

The protein belongs to the ABC transporter superfamily. Macrolide exporter (TC 3.A.1.122) family. Homodimer. Part of the tripartite efflux system MacAB-TolC, which is composed of an inner membrane transporter, MacB, a periplasmic membrane fusion protein, MacA, and an outer membrane component, TolC. The complex forms a large protein conduit and can translocate molecules across both the inner and outer membranes. Interacts with MacA.

The protein localises to the cell inner membrane. In terms of biological role, part of the tripartite efflux system MacAB-TolC. MacB is a non-canonical ABC transporter that contains transmembrane domains (TMD), which form a pore in the inner membrane, and an ATP-binding domain (NBD), which is responsible for energy generation. Confers resistance against macrolides. The chain is Macrolide export ATP-binding/permease protein MacB from Shigella flexneri.